Here is a 76-residue protein sequence, read N- to C-terminus: DNA-directed RNA polymerase subunit epsilon (76 aa).

Belongs to the RNA polymerase subunit epsilon family. In terms of assembly, RNAP is composed of a core of 2 alpha, a beta and a beta' subunit. The core is associated with a delta subunit, and at least one of epsilon or omega. When a sigma factor is associated with the core the holoenzyme is formed, which can initiate transcription.

The enzyme catalyses RNA(n) + a ribonucleoside 5'-triphosphate = RNA(n+1) + diphosphate. A non-essential component of RNA polymerase (RNAP). The chain is DNA-directed RNA polymerase subunit epsilon from Lactococcus lactis subsp. lactis (strain IL1403) (Streptococcus lactis).